A 513-amino-acid polypeptide reads, in one-letter code: Light-independent protochlorophyllide reductase subunit B (513 aa).

Residue Asp-36 participates in [4Fe-4S] cluster binding. Residue Asp-299 is the Proton donor of the active site. 434–435 (GM) contacts substrate.

It belongs to the ChlB/BchB/BchZ family. In terms of assembly, protochlorophyllide reductase is composed of three subunits; ChlL, ChlN and ChlB. Forms a heterotetramer of two ChlB and two ChlN subunits. [4Fe-4S] cluster is required as a cofactor.

The protein localises to the plastid. The protein resides in the chloroplast. It catalyses the reaction chlorophyllide a + oxidized 2[4Fe-4S]-[ferredoxin] + 2 ADP + 2 phosphate = protochlorophyllide a + reduced 2[4Fe-4S]-[ferredoxin] + 2 ATP + 2 H2O. Its pathway is porphyrin-containing compound metabolism; chlorophyll biosynthesis (light-independent). Component of the dark-operative protochlorophyllide reductase (DPOR) that uses Mg-ATP and reduced ferredoxin to reduce ring D of protochlorophyllide (Pchlide) to form chlorophyllide a (Chlide). This reaction is light-independent. The NB-protein (ChlN-ChlB) is the catalytic component of the complex. In Cycas taitungensis (Prince sago), this protein is Light-independent protochlorophyllide reductase subunit B.